We begin with the raw amino-acid sequence, 225 residues long: Superoxide dismutase [Mn], mitochondrial (225 aa).

The N-terminal 27 residues, 1–27 (MITAITRTALPRATLRTSLATMSTIRA), are a transit peptide targeting the mitochondrion. Mn(2+) is bound by residues His53, His101, Asp187, and His191.

It belongs to the iron/manganese superoxide dismutase family. Mn(2+) serves as cofactor.

Its subcellular location is the mitochondrion. It localises to the cytoplasm. It carries out the reaction 2 superoxide + 2 H(+) = H2O2 + O2. Functionally, destroys radicals which are normally produced within the cells and which are toxic to biological systems. Destroys mitochondrial radicals produced by oxidative stress. Its function is as follows. Destroys cytoplasmic radicals produced in low copper environments; a condition which inactivates the cytoplasmic copper-dependent superoxide dismutase SOD1. The protein is Superoxide dismutase [Mn], mitochondrial of Cryptococcus neoformans var. grubii serotype A (strain H99 / ATCC 208821 / CBS 10515 / FGSC 9487) (Filobasidiella neoformans var. grubii).